The following is a 1235-amino-acid chain: ATP-dependent helicase/nuclease subunit A (1235 aa).

The UvrD-like helicase ATP-binding domain maps to 12–482; it reads SLWTDDQWKA…IDLSQNFRSR (471 aa). 33 to 40 lines the ATP pocket; that stretch reads AAAGSGKT. The region spanning 509–800 is the UvrD-like helicase C-terminal domain; the sequence is AAELTLGANF…RMMTIHASKG (292 aa).

It belongs to the helicase family. AddA subfamily. Heterodimer of AddA and AddB/RexB. Mg(2+) serves as cofactor.

The catalysed reaction is Couples ATP hydrolysis with the unwinding of duplex DNA by translocating in the 3'-5' direction.. The enzyme catalyses ATP + H2O = ADP + phosphate + H(+). The heterodimer acts as both an ATP-dependent DNA helicase and an ATP-dependent, dual-direction single-stranded exonuclease. Recognizes the chi site generating a DNA molecule suitable for the initiation of homologous recombination. The AddA nuclease domain is required for chi fragment generation; this subunit has the helicase and 3' -&gt; 5' nuclease activities. The chain is ATP-dependent helicase/nuclease subunit A from Listeria monocytogenes serovar 1/2a (strain ATCC BAA-679 / EGD-e).